A 452-amino-acid chain; its full sequence is tRNA modification GTPase MnmE (452 aa).

R21, E82, and R121 together coordinate (6S)-5-formyl-5,6,7,8-tetrahydrofolate. A TrmE-type G domain is found at 217-373 (GINTTIIGKP…LENKIIEMFN (157 aa)). K(+) is bound at residue N227. Residues 227 to 232 (NVGKSS), 246 to 252 (TDIPGTT), and 271 to 274 (DTAG) contribute to the GTP site. A Mg(2+)-binding site is contributed by S231. K(+) contacts are provided by T246, I248, and T251. T252 serves as a coordination point for Mg(2+). Position 452 (K452) interacts with (6S)-5-formyl-5,6,7,8-tetrahydrofolate.

This sequence belongs to the TRAFAC class TrmE-Era-EngA-EngB-Septin-like GTPase superfamily. TrmE GTPase family. As to quaternary structure, homodimer. Heterotetramer of two MnmE and two MnmG subunits. Requires K(+) as cofactor.

It localises to the cytoplasm. Exhibits a very high intrinsic GTPase hydrolysis rate. Involved in the addition of a carboxymethylaminomethyl (cmnm) group at the wobble position (U34) of certain tRNAs, forming tRNA-cmnm(5)s(2)U34. This Finegoldia magna (strain ATCC 29328 / DSM 20472 / WAL 2508) (Peptostreptococcus magnus) protein is tRNA modification GTPase MnmE.